Consider the following 204-residue polypeptide: Methylthioribulose-1-phosphate dehydratase (204 aa).

His94 and His96 together coordinate Zn(2+).

This sequence belongs to the aldolase class II family. MtnB subfamily. Requires Zn(2+) as cofactor.

The catalysed reaction is 5-(methylsulfanyl)-D-ribulose 1-phosphate = 5-methylsulfanyl-2,3-dioxopentyl phosphate + H2O. It participates in amino-acid biosynthesis; L-methionine biosynthesis via salvage pathway; L-methionine from S-methyl-5-thio-alpha-D-ribose 1-phosphate: step 2/6. Its function is as follows. Catalyzes the dehydration of methylthioribulose-1-phosphate (MTRu-1-P) into 2,3-diketo-5-methylthiopentyl-1-phosphate (DK-MTP-1-P). This is Methylthioribulose-1-phosphate dehydratase from Pseudomonas savastanoi pv. phaseolicola (strain 1448A / Race 6) (Pseudomonas syringae pv. phaseolicola (strain 1448A / Race 6)).